Reading from the N-terminus, the 440-residue chain is 3-phosphoshikimate 1-carboxyvinyltransferase (440 aa).

3-phosphoshikimate contacts are provided by K26, S27, and R31. K26 is a binding site for phosphoenolpyruvate. Phosphoenolpyruvate is bound by residues G100 and R134. The 3-phosphoshikimate site is built by S180, S181, Q182, S208, D323, N346, and K350. Q182 is a binding site for phosphoenolpyruvate. The active-site Proton acceptor is the D323. Residues R354, R398, and K423 each coordinate phosphoenolpyruvate.

This sequence belongs to the EPSP synthase family. In terms of assembly, monomer.

It is found in the cytoplasm. It catalyses the reaction 3-phosphoshikimate + phosphoenolpyruvate = 5-O-(1-carboxyvinyl)-3-phosphoshikimate + phosphate. It participates in metabolic intermediate biosynthesis; chorismate biosynthesis; chorismate from D-erythrose 4-phosphate and phosphoenolpyruvate: step 6/7. Its function is as follows. Catalyzes the transfer of the enolpyruvyl moiety of phosphoenolpyruvate (PEP) to the 5-hydroxyl of shikimate-3-phosphate (S3P) to produce enolpyruvyl shikimate-3-phosphate and inorganic phosphate. The polypeptide is 3-phosphoshikimate 1-carboxyvinyltransferase (Pasteurella multocida (strain Pm70)).